The sequence spans 420 residues: Ribulose bisphosphate carboxylase large chain (420 aa).

Residues Asn-103 and Thr-153 each coordinate substrate. Lys-155 functions as the Proton acceptor in the catalytic mechanism. Lys-157 is a substrate binding site. Mg(2+) contacts are provided by Lys-181, Asp-183, and Glu-184. Lys-181 is modified (N6-carboxylysine). His-274 (proton acceptor) is an active-site residue. Positions 275, 307, and 359 each coordinate substrate.

Belongs to the RuBisCO large chain family. Type I subfamily. Heterohexadecamer of 8 large chains and 8 small chains; disulfide-linked. The disulfide link is formed within the large subunit homodimers. It depends on Mg(2+) as a cofactor. In terms of processing, the disulfide bond which can form in the large chain dimeric partners within the hexadecamer appears to be associated with oxidative stress and protein turnover.

It is found in the plastid. It localises to the chloroplast. It catalyses the reaction 2 (2R)-3-phosphoglycerate + 2 H(+) = D-ribulose 1,5-bisphosphate + CO2 + H2O. The enzyme catalyses D-ribulose 1,5-bisphosphate + O2 = 2-phosphoglycolate + (2R)-3-phosphoglycerate + 2 H(+). RuBisCO catalyzes two reactions: the carboxylation of D-ribulose 1,5-bisphosphate, the primary event in carbon dioxide fixation, as well as the oxidative fragmentation of the pentose substrate in the photorespiration process. Both reactions occur simultaneously and in competition at the same active site. In Anemia mexicana (Mexican fern), this protein is Ribulose bisphosphate carboxylase large chain.